The following is a 467-amino-acid chain: MTNWLQKRVRLSPGETALVFEGKQETFEEIYEAVEKLAGKLFARGIRKDEMVALLGKNDRMTFLLIHALQQLGAITLFLNNRLTKKEITFQLANAEVKQVIVADAFVDKVTSGISYEELQQTTYVEPDLCKTWDLSRTASVMYTSGTTGKPKGVMQTYENHWWSAVSSVLNLGLTEKDSWLCAVPIFHISGLSIMMRSVIYGIPVYLEEHFDEEKITQLLESGKISTISVVTSMLERLLKIQGGSYHPNVRTVLLGGGPANKAVLEICKQRDIPLVQSFGMTETASQIVTLPPKDALNKIGSSGKALFPAEVKIADDGEILLKGPSITPGYLHNEKATAKAFIDGWFKTGDIGYLDEEGFLFVLERRSDLIISGGENIYPTEIEHVIGAYEAVEEVAVVGKSDAKWGSVPVAFIVVNEGFDEGVLKDICQTNLASFKIPKQITIVEHLPKTASGKIQRNKLKERHSN.

This sequence belongs to the ATP-dependent AMP-binding enzyme family. MenE subfamily.

The catalysed reaction is 2-succinylbenzoate + ATP + CoA = 2-succinylbenzoyl-CoA + AMP + diphosphate. It functions in the pathway quinol/quinone metabolism; 1,4-dihydroxy-2-naphthoate biosynthesis; 1,4-dihydroxy-2-naphthoate from chorismate: step 5/7. It participates in quinol/quinone metabolism; menaquinone biosynthesis. Converts 2-succinylbenzoate (OSB) to 2-succinylbenzoyl-CoA (OSB-CoA). The sequence is that of 2-succinylbenzoate--CoA ligase from Listeria innocua serovar 6a (strain ATCC BAA-680 / CLIP 11262).